Consider the following 156-residue polypeptide: uncharacterized protein (156 aa).

The 145-residue stretch at 1–145 (MIIRKFSSKD…DAILMIKKKP (145 aa)) folds into the N-acetyltransferase domain.

Belongs to the acetyltransferase family.

The protein localises to the cytoplasm. This is an uncharacterized protein from Methanocaldococcus jannaschii (strain ATCC 43067 / DSM 2661 / JAL-1 / JCM 10045 / NBRC 100440) (Methanococcus jannaschii).